The sequence spans 471 residues: Glutamate--tRNA ligase (471 aa).

Positions 10–20 (PSPTGFLHIGG) match the 'HIGH' region motif. The segment at 117–137 (GRPPRYDGRWRDRPASERPTD) is disordered. A 'KMSKS' region motif is present at residues 239-243 (KLSKR). An ATP-binding site is contributed by Lys-242.

The protein belongs to the class-I aminoacyl-tRNA synthetase family. Glutamate--tRNA ligase type 1 subfamily. As to quaternary structure, monomer.

The protein localises to the cytoplasm. It carries out the reaction tRNA(Glu) + L-glutamate + ATP = L-glutamyl-tRNA(Glu) + AMP + diphosphate. Its function is as follows. Catalyzes the attachment of glutamate to tRNA(Glu) in a two-step reaction: glutamate is first activated by ATP to form Glu-AMP and then transferred to the acceptor end of tRNA(Glu). This chain is Glutamate--tRNA ligase, found in Azorhizobium caulinodans (strain ATCC 43989 / DSM 5975 / JCM 20966 / LMG 6465 / NBRC 14845 / NCIMB 13405 / ORS 571).